Here is a 150-residue protein sequence, read N- to C-terminus: 16.6 kDa heat shock protein (150 aa).

Positions 31-150 constitute a sHSP domain; it reads AERCPVLTNV…PQLKAIPISG (120 aa).

The protein belongs to the small heat shock protein (HSP20) family. In terms of assembly, may form oligomeric structures.

It is found in the cytoplasm. This Oryza sativa subsp. japonica (Rice) protein is 16.6 kDa heat shock protein (HSP16.6).